A 478-amino-acid polypeptide reads, in one-letter code: Cytochrome c-552 (478 aa).

The first 26 residues, 1-26, serve as a signal peptide directing secretion; sequence MARKTLRARRFFSLIFPFFFMTSVYA. H94 is a binding site for heme c. Heme-binding residues include C122, C125, and K126. Heme c is bound by residues C160, C163, H164, C209, C212, and H213. Positions 215, 216, 261, and 263 each coordinate Ca(2+). Y216 serves as a coordination point for substrate. Residue H264 participates in substrate binding. Positions 275, 282, 285, 286, 301, 314, 317, 318, and 393 each coordinate heme c.

It belongs to the cytochrome c-552 family. Ca(2+) is required as a cofactor. Heme c serves as cofactor.

It is found in the periplasm. The catalysed reaction is 6 Fe(III)-[cytochrome c] + NH4(+) + 2 H2O = 6 Fe(II)-[cytochrome c] + nitrite + 8 H(+). Its pathway is nitrogen metabolism; nitrate reduction (assimilation). Catalyzes the reduction of nitrite to ammonia, consuming six electrons in the process. The protein is Cytochrome c-552 of Salmonella arizonae (strain ATCC BAA-731 / CDC346-86 / RSK2980).